Here is a 406-residue protein sequence, read N- to C-terminus: Mitochondrial intermembrane space import and assembly protein 40 (406 aa).

A mitochondrion-targeting transit peptide spans 1-23 (MFRVSLQATRRVAFRSARQIRFY). Residues 24–37 (SAHPPSGGVSHMNK) are Mitochondrial matrix-facing. A helical; Signal-anchor for type II membrane protein membrane pass occupies residues 38–54 (PALLLAGFSTLGAIYVA). Residues 55 to 406 (DGCPTLIERK…AVTNTDDEKK (352 aa)) are Mitochondrial intermembrane-facing. Disordered stretches follow at residues 67-110 (PAEK…TTPE) and 142-276 (VNEQ…PETG). Over residues 205 to 224 (ASKDGSEGESDVVLHEKSPA) the composition is skewed to basic and acidic residues. Residues 242–260 (SGGTAEQSATAAAAAAGVQ) show a composition bias toward low complexity. 3 disulfides stabilise this stretch: cysteine 282–cysteine 284, cysteine 293–cysteine 326, and cysteine 303–cysteine 316. A CHCH domain is found at 290-334 (YGPCGEEFKSAFSCFVYSEADPKGINCVEKFSTMQNCFRKYPDYY). Short sequence motifs (cx9C motif) lie at residues 293 to 303 (CGEEFKSAFSC) and 316 to 326 (CVEKFSTMQNC). Disordered regions lie at residues 341–365 (EEEA…ATST) and 384–406 (EENP…DEKK). The segment covering 356 to 365 (TTPVSTATST) has biased composition (low complexity). Residues 384–393 (EENPQLKDTP) are compositionally biased toward basic and acidic residues.

In terms of assembly, monomer. The cofactor is Cu(2+). It depends on Zn(2+) as a cofactor.

The protein resides in the mitochondrion inner membrane. Its function is as follows. Required for the import and folding of small cysteine-containing proteins (small Tim) in the mitochondrial intermembrane space (IMS). Forms a redox cycle with ERV1 that involves a disulfide relay system. Precursor proteins to be imported into the IMS are translocated in their reduced form into the mitochondria. The oxidized form of MIA40 forms a transient intermolecular disulfide bridge with the reduced precursor protein, resulting in oxidation of the precursor protein that now contains an intramolecular disulfide bond and is able to undergo folding in the IMS. The chain is Mitochondrial intermembrane space import and assembly protein 40 (MIA40) from Kluyveromyces lactis (strain ATCC 8585 / CBS 2359 / DSM 70799 / NBRC 1267 / NRRL Y-1140 / WM37) (Yeast).